Reading from the N-terminus, the 824-residue chain is U-box domain-containing protein 24 (824 aa).

One can recognise a U-box domain in the interval 13–92 (GAFEAFVCPL…HEWRARNEEK (80 aa)). ARM repeat units follow at residues 133–172 (AASK…VLVE), 175–214 (DDNK…ELSG), 217–258 (PTCE…NLDR), 260–299 (DANV…ELAL), 300–339 (ANDD…EISS), 341–385 (EASA…NLVA), 396–435 (DDDE…PAIG), 441–481 (VLAG…DIRV), and 486–525 (LLRN…EEQA).

In terms of assembly, interacts with BZR1, BZR2, BZR3 and GSK2. Auto-ubiquitinated. In terms of processing, phosphorylated by GSK2. Phosphorylation of PUB24 increases its cellular stability.

It localises to the cytoplasm. The protein localises to the cytosol. The protein resides in the nucleus. The enzyme catalyses S-ubiquitinyl-[E2 ubiquitin-conjugating enzyme]-L-cysteine + [acceptor protein]-L-lysine = [E2 ubiquitin-conjugating enzyme]-L-cysteine + N(6)-ubiquitinyl-[acceptor protein]-L-lysine.. Its pathway is protein modification; protein ubiquitination. In terms of biological role, E3 ubiquitin-protein ligase that functions as a negative regulator of brassinosteroid (BR) signaling. Targets BZR1, a positive regulator of BR signaling pathway, and promotes its degradation via the ubiquitin-26S proteasome pathway. This chain is U-box domain-containing protein 24, found in Oryza sativa subsp. japonica (Rice).